Here is a 171-residue protein sequence, read N- to C-terminus: MDLKKYIRDIENFPKTGIMFKDISPLLANGKALNYTITEMAKLAQDVDVIVGPDARGFLFGTPTAAFLKKPFIMVRKPGKLPGDVISKSYDLEYGNNVLQIQKGFIKKGQTVAIIDDVLATGGTTKAIIKLLEEQGAIVKKVILLLELVDLNGRQLITKDNDIEIVSLVKF.

It belongs to the purine/pyrimidine phosphoribosyltransferase family. As to quaternary structure, homodimer.

It localises to the cytoplasm. The enzyme catalyses AMP + diphosphate = 5-phospho-alpha-D-ribose 1-diphosphate + adenine. It functions in the pathway purine metabolism; AMP biosynthesis via salvage pathway; AMP from adenine: step 1/1. Functionally, catalyzes a salvage reaction resulting in the formation of AMP, that is energically less costly than de novo synthesis. This is Adenine phosphoribosyltransferase from Mycoplasmopsis fermentans (strain ATCC 19989 / NBRC 14854 / NCTC 10117 / PG18) (Mycoplasma fermentans).